The chain runs to 77 residues: Acyl carrier protein (77 aa).

The Carrier domain occupies 1–76 (MAIFDDVKKV…DVVNYIENLQ (76 aa)). Position 36 is an O-(pantetheine 4'-phosphoryl)serine (Ser-36).

Belongs to the acyl carrier protein (ACP) family. In terms of processing, 4'-phosphopantetheine is transferred from CoA to a specific serine of apo-ACP by AcpS. This modification is essential for activity because fatty acids are bound in thioester linkage to the sulfhydryl of the prosthetic group.

It localises to the cytoplasm. It participates in lipid metabolism; fatty acid biosynthesis. Functionally, carrier of the growing fatty acid chain in fatty acid biosynthesis. The protein is Acyl carrier protein of Campylobacter lari (strain RM2100 / D67 / ATCC BAA-1060).